A 297-amino-acid chain; its full sequence is Ribosomal protein L11 methyltransferase (297 aa).

4 residues coordinate S-adenosyl-L-methionine: threonine 150, glycine 171, aspartate 193, and asparagine 233.

It belongs to the methyltransferase superfamily. PrmA family.

Its subcellular location is the cytoplasm. It catalyses the reaction L-lysyl-[protein] + 3 S-adenosyl-L-methionine = N(6),N(6),N(6)-trimethyl-L-lysyl-[protein] + 3 S-adenosyl-L-homocysteine + 3 H(+). Its function is as follows. Methylates ribosomal protein L11. The sequence is that of Ribosomal protein L11 methyltransferase from Laribacter hongkongensis (strain HLHK9).